A 113-amino-acid chain; its full sequence is Thioredoxin H-type (113 aa).

The Thioredoxin domain maps to 2-112 (GGSVIVIDSK…LKALVAKHAA (111 aa)). Active-site nucleophile residues include Cys-37 and Cys-40. A disulfide bond links Cys-37 and Cys-40.

Belongs to the thioredoxin family. Plant H-type subfamily.

It is found in the cytoplasm. Its function is as follows. Participates in various redox reactions through the reversible oxidation of the active center dithiol to a disulfide. The H form is known to activate a number of cytosolic enzymes. The polypeptide is Thioredoxin H-type (TRXH) (Chlamydomonas reinhardtii (Chlamydomonas smithii)).